The primary structure comprises 539 residues: CTP synthase (539 aa).

The interval M1 to L267 is amidoligase domain. Position 13 (S13) interacts with CTP. A UTP-binding site is contributed by S13. S14–I19 serves as a coordination point for ATP. Y54 provides a ligand contact to L-glutamine. Residue D71 participates in ATP binding. Mg(2+) contacts are provided by D71 and E141. Residues D148 to E150, K188 to Q193, and K224 each bind CTP. UTP-binding positions include K188–Q193 and K224. An ATP-binding site is contributed by R240–A242. A Glutamine amidotransferase type-1 domain is found at T293–A535. An L-glutamine-binding site is contributed by G355. Catalysis depends on C382, which acts as the Nucleophile; for glutamine hydrolysis. L-glutamine is bound by residues L383–Q386, E406, and R463. Residues H508 and E510 contribute to the active site.

It belongs to the CTP synthase family. As to quaternary structure, homotetramer.

It catalyses the reaction UTP + L-glutamine + ATP + H2O = CTP + L-glutamate + ADP + phosphate + 2 H(+). It carries out the reaction L-glutamine + H2O = L-glutamate + NH4(+). The catalysed reaction is UTP + NH4(+) + ATP = CTP + ADP + phosphate + 2 H(+). It participates in pyrimidine metabolism; CTP biosynthesis via de novo pathway; CTP from UDP: step 2/2. Allosterically activated by GTP, when glutamine is the substrate; GTP has no effect on the reaction when ammonia is the substrate. The allosteric effector GTP functions by stabilizing the protein conformation that binds the tetrahedral intermediate(s) formed during glutamine hydrolysis. Inhibited by the product CTP, via allosteric rather than competitive inhibition. Catalyzes the ATP-dependent amination of UTP to CTP with either L-glutamine or ammonia as the source of nitrogen. Regulates intracellular CTP levels through interactions with the four ribonucleotide triphosphates. In Staphylococcus carnosus (strain TM300), this protein is CTP synthase.